The primary structure comprises 208 residues: Large ribosomal subunit protein uL3 (208 aa).

The protein belongs to the universal ribosomal protein uL3 family. As to quaternary structure, part of the 50S ribosomal subunit. Forms a cluster with proteins L14 and L19.

Its function is as follows. One of the primary rRNA binding proteins, it binds directly near the 3'-end of the 23S rRNA, where it nucleates assembly of the 50S subunit. In Salinibacter ruber (strain DSM 13855 / M31), this protein is Large ribosomal subunit protein uL3.